The primary structure comprises 174 residues: MSFQVVTGWLDNSPRRIFAFVSLASIGMLAFGQYLQHVVGLEPCPMCIVQRYALVLVAIIAGLTGASGRKGLHLGGAVLMLGSSGFGAYVAARQSWLQWYPPEVVSCGRDFYGMIETFPLQRAIPMIFKGSGDCSKVDWTFLGGSIANWTFVVFGLIVLLSLALIWRRVSRRVS.

Topologically, residues 1–17 (MSFQVVTGWLDNSPRRI) are cytoplasmic. The helical transmembrane segment at 18–34 (FAFVSLASIGMLAFGQY) threads the bilayer. The Periplasmic portion of the chain corresponds to 35-52 (LQHVVGLEPCPMCIVQRY). A disulfide bridge connects residues cysteine 44 and cysteine 47. A helical transmembrane segment spans residues 53–67 (ALVLVAIIAGLTGAS). Residues 68-74 (GRKGLHL) lie on the Cytoplasmic side of the membrane. A helical membrane pass occupies residues 75–92 (GGAVLMLGSSGFGAYVAA). Residues 93 to 148 (RQSWLQWYPPEVVSCGRDFYGMIETFPLQRAIPMIFKGSGDCSKVDWTFLGGSIAN) lie on the Periplasmic side of the membrane. Residues cysteine 107 and cysteine 134 are joined by a disulfide bond. Residues 149-167 (WTFVVFGLIVLLSLALIWR) traverse the membrane as a helical segment. Topologically, residues 168–174 (RVSRRVS) are cytoplasmic.

The protein belongs to the DsbB family.

The protein localises to the cell inner membrane. In terms of biological role, required for disulfide bond formation in some periplasmic proteins. Acts by oxidizing the DsbA protein. In Albidiferax ferrireducens (strain ATCC BAA-621 / DSM 15236 / T118) (Rhodoferax ferrireducens), this protein is Disulfide bond formation protein B.